A 133-amino-acid chain; its full sequence is Antifungal protein ginkbilobin-like protein 1 (133 aa).

An N-terminal signal peptide occupies residues 1 to 24 (MSMGSFGFALAVMVLAVLVASAAG). The Gnk2-homologous domain occupies 28–133 (TNFVSSACNT…CFIRYEQYSI (106 aa)). Cystine bridges form between C35–C111, C87–C96, and C99–C124. N36 provides a ligand contact to alpha-D-mannopyranose. Alpha-D-mannopyranose is bound by residues R118 and E129.

In terms of biological role, exerts antifungal activity through its carbohydrate-binding specificity. The sequence is that of Antifungal protein ginkbilobin-like protein 1 from Picea sitchensis (Sitka spruce).